Reading from the N-terminus, the 441-residue chain is Protein eva-1 homolog C (441 aa).

Residues 1–23 (MLLPGRARQPPTPQPVQHPGLRR) form a disordered region. The N-terminal stretch at 1–48 (MLLPGRARQPPTPQPVQHPGLRRQVEPPGQLLRLFYCTVLVCSKEISA) is a signal peptide. Topologically, residues 49–322 (LTDFSGYLTK…AYIRAHPERA (274 aa)) are extracellular. N-linked (GlcNAc...) asparagine glycosylation is present at asparagine 62. The region spanning 67–159 (ACDGDYLNLQ…KYLLVSFKCQ (93 aa)) is the SUEL-type lectin 1 domain. Residue asparagine 165 is glycosylated (N-linked (GlcNAc...) asparagine). One can recognise an SUEL-type lectin 2 domain in the interval 168 to 260 (VCEDQELKLH…KYLTVTYACV (93 aa)). A helical transmembrane segment spans residues 323-343 (ALLFVSSVCIGLALTLCALVI). Over 344–441 (RESCAKDFRD…SLPRNMGQFY (98 aa)) the chain is Cytoplasmic. The interval 362 to 390 (VPGSDKVEEDSEDEEEEEDPSESDFPGEL) is disordered. The span at 368–383 (VEEDSEDEEEEEDPSE) shows a compositional bias: acidic residues.

Belongs to the EVA1 family. As to expression, ubiquitous.

It is found in the membrane. Functionally, binds heparin. This is Protein eva-1 homolog C (EVA1C) from Homo sapiens (Human).